The primary structure comprises 246 residues: tRNA (guanine-N(1)-)-methyltransferase (246 aa).

Residues G112 and 131–136 (IGDYVL) each bind S-adenosyl-L-methionine.

The protein belongs to the RNA methyltransferase TrmD family. Homodimer.

It localises to the cytoplasm. The catalysed reaction is guanosine(37) in tRNA + S-adenosyl-L-methionine = N(1)-methylguanosine(37) in tRNA + S-adenosyl-L-homocysteine + H(+). Its function is as follows. Specifically methylates guanosine-37 in various tRNAs. This Thermosipho melanesiensis (strain DSM 12029 / CIP 104789 / BI429) protein is tRNA (guanine-N(1)-)-methyltransferase.